A 22-amino-acid chain; its full sequence is Magnificalysin II (22 aa).

The segment at 3-12 (ALAGTIIDGA) is plays an important role in the hemolytic activity. The interval 11 to 22 (GASLGFDILNKV) is N-terminal region.

Belongs to the actinoporin family. Sea anemone subfamily. As to quaternary structure, octamer or nonamer in membranes. Monomer in the soluble state.

Its subcellular location is the secreted. It is found in the nematocyst. The protein resides in the target cell membrane. Pore-forming protein that forms cations-selective hydrophilic pores of around 1 nm and causes cytolysis. Pore formation is a multi-step process that involves specific recognition of membrane sphingomyelin (but neither cholesterol nor phosphatidylcholine) using aromatic rich region and adjacent phosphocholine (POC) binding site, firm binding to the membrane (mainly driven by hydrophobic interactions) accompanied by the transfer of the N-terminal region to the lipid-water interface and finally pore formation after oligomerization of monomers. This is Magnificalysin II from Heteractis magnifica (Magnificent sea anemone).